The sequence spans 274 residues: 2,3,4,5-tetrahydropyridine-2,6-dicarboxylate N-succinyltransferase (274 aa).

Substrate contacts are provided by Arg104 and Asp141.

Belongs to the transferase hexapeptide repeat family. Homotrimer.

The protein localises to the cytoplasm. The enzyme catalyses (S)-2,3,4,5-tetrahydrodipicolinate + succinyl-CoA + H2O = (S)-2-succinylamino-6-oxoheptanedioate + CoA. It functions in the pathway amino-acid biosynthesis; L-lysine biosynthesis via DAP pathway; LL-2,6-diaminopimelate from (S)-tetrahydrodipicolinate (succinylase route): step 1/3. The protein is 2,3,4,5-tetrahydropyridine-2,6-dicarboxylate N-succinyltransferase of Escherichia coli O6:H1 (strain CFT073 / ATCC 700928 / UPEC).